The primary structure comprises 297 residues: Glycerol-3-phosphate dehydrogenase [NAD(P)+] (297 aa).

NADPH-binding residues include Trp-11, Arg-33, and Lys-79. The sn-glycerol 3-phosphate site is built by Lys-79, Gly-107, and Ser-109. Ala-111 is a binding site for NADPH. Sn-glycerol 3-phosphate contacts are provided by Lys-161, Asp-214, Ser-224, Arg-225, and Asn-226. Residue Lys-161 is the Proton acceptor of the active site. Residue Arg-225 participates in NADPH binding. NADPH is bound by residues Val-249 and Glu-251.

Belongs to the NAD-dependent glycerol-3-phosphate dehydrogenase family.

It localises to the cytoplasm. It catalyses the reaction sn-glycerol 3-phosphate + NAD(+) = dihydroxyacetone phosphate + NADH + H(+). It carries out the reaction sn-glycerol 3-phosphate + NADP(+) = dihydroxyacetone phosphate + NADPH + H(+). It participates in membrane lipid metabolism; glycerophospholipid metabolism. In terms of biological role, catalyzes the reduction of the glycolytic intermediate dihydroxyacetone phosphate (DHAP) to sn-glycerol 3-phosphate (G3P), the key precursor for phospholipid synthesis. The protein is Glycerol-3-phosphate dehydrogenase [NAD(P)+] of Campylobacter jejuni subsp. jejuni serotype O:23/36 (strain 81-176).